The chain runs to 270 residues: Glucosamine-6-phosphate deaminase (270 aa).

Asp-72 (proton acceptor; for enolization step) is an active-site residue. The active-site For ring-opening step is Asp-141. The active-site Proton acceptor; for ring-opening step is the His-143. The active-site For ring-opening step is the Glu-148.

Belongs to the glucosamine/galactosamine-6-phosphate isomerase family. NagB subfamily.

The catalysed reaction is alpha-D-glucosamine 6-phosphate + H2O = beta-D-fructose 6-phosphate + NH4(+). It participates in amino-sugar metabolism; N-acetylneuraminate degradation; D-fructose 6-phosphate from N-acetylneuraminate: step 5/5. Allosterically activated by N-acetylglucosamine 6-phosphate (GlcNAc6P). Functionally, catalyzes the reversible isomerization-deamination of glucosamine 6-phosphate (GlcN6P) to form fructose 6-phosphate (Fru6P) and ammonium ion. The polypeptide is Glucosamine-6-phosphate deaminase (Bacteroides fragilis (strain ATCC 25285 / DSM 2151 / CCUG 4856 / JCM 11019 / LMG 10263 / NCTC 9343 / Onslow / VPI 2553 / EN-2)).